A 121-amino-acid polypeptide reads, in one-letter code: Small ribosomal subunit protein uS13 (121 aa).

Residues 89–121 (RRHRMSLPVRGQRTRTNARTRRGSRKTVAGRKK) form a disordered region. The segment covering 100 to 121 (QRTRTNARTRRGSRKTVAGRKK) has biased composition (basic residues).

This sequence belongs to the universal ribosomal protein uS13 family. Part of the 30S ribosomal subunit. Forms a loose heterodimer with protein S19. Forms two bridges to the 50S subunit in the 70S ribosome.

In terms of biological role, located at the top of the head of the 30S subunit, it contacts several helices of the 16S rRNA. In the 70S ribosome it contacts the 23S rRNA (bridge B1a) and protein L5 of the 50S subunit (bridge B1b), connecting the 2 subunits; these bridges are implicated in subunit movement. Contacts the tRNAs in the A and P-sites. The polypeptide is Small ribosomal subunit protein uS13 (Prochlorococcus marinus subsp. pastoris (strain CCMP1986 / NIES-2087 / MED4)).